A 669-amino-acid chain; its full sequence is Very long-chain fatty acid transport protein (669 aa).

Topologically, residues 1–5 are cytoplasmic; it reads MSPIQ. Residues 6–26 traverse the membrane as a helical segment; sequence VVVFALSRIFLLLFRLIKLII. Topologically, residues 27–148 are extracellular; sequence TPIQKSLGYL…YVAIDCTNKP (122 aa). A helical membrane pass occupies residues 149–169; the sequence is LFVFLWLSLWNIGAIPAFLNY. Residues 170–270 are Cytoplasmic-facing; that stretch reads NTKGTPLVHS…TGLPKSAIMS (101 aa). ATP is bound at residue 256 to 267; sequence YTSGTTGLPKSA. The stretch at 271–339 is an intramembrane region; it reads WRKSSVGCQV…FWKQVYLTGA (69 aa). Topologically, residues 340–669 are cytoplasmic; sequence THIQYVGEVC…EAIDAQTIKL (330 aa). Positions 501-551 match the FACS motif; that stretch reads DAWYRCGDLLKADEYGLWYFLDRMGDTFRWKSENVSTTEVEDQLTASNKEQ. Residues 667 to 669 carry the C-terminal peroxisome targeting signal (PTS1) motif; the sequence is IKL.

Belongs to the ATP-dependent AMP-binding enzyme family. In terms of assembly, interacts with fatty acyl-CoA synthetases FAA1 and FAA4.

The protein localises to the lipid droplet. It localises to the cell membrane. It is found in the peroxisome membrane. The protein resides in the peroxisome. The enzyme catalyses a very long-chain fatty acid + ATP + CoA = a very long-chain fatty acyl-CoA + AMP + diphosphate. It catalyses the reaction tetracosanoate + ATP + CoA = tetracosanoyl-CoA + AMP + diphosphate. Its function is as follows. Acyl-CoA synthetase required for both the import of long chain fatty acids (LCFAs) (C14-C18) and the activation very long chain fatty acids (VLCFAs) (C20-C26) by esterification of the fatty acids into metabolically active CoA-thioesters for subsequent degradation or incorporation into phospholipids. The transport and fatty acyl-CoA synthetase activities are genetically separable and are thus independent activities. Esterifies VLCFAs in the peroxisome matrix. The VLCFAs are actively transported into peroxisomes by a PXA1-PXA2 heterodimeric transporter in the peroxisomal membrane. In Saccharomyces cerevisiae (strain ATCC 204508 / S288c) (Baker's yeast), this protein is Very long-chain fatty acid transport protein (FAT1).